The primary structure comprises 560 residues: Putative transport protein VP1232 (560 aa).

5 consecutive transmembrane segments (helical) span residues 8–28 (LLDQ…LAIG), 37–57 (LGNS…GFSF), 66–86 (FMLF…GIFF), 91–111 (HYFI…YGLS), and 164–184 (VGYA…AKLL). 2 RCK C-terminal domains span residues 205–292 (LGNS…FRNG) and 293–376 (KEVF…KIGF). 6 consecutive transmembrane segments (helical) span residues 386 to 406 (LLAF…TMTF), 409 to 429 (VSFS…LGFL), 443 to 463 (ALNM…GLSA), 478 to 498 (VIGL…LVGA), 506 to 526 (ALLF…DVVN), and 539 to 559 (AGTY…LIIL).

The protein belongs to the AAE transporter (TC 2.A.81) family. YbjL subfamily.

The protein resides in the cell membrane. In Vibrio parahaemolyticus serotype O3:K6 (strain RIMD 2210633), this protein is Putative transport protein VP1232.